A 235-amino-acid polypeptide reads, in one-letter code: MGRAFEYRRASKEARWDKMSKLFPKLAKAIQVAAKEGGTDPDMNPKLRSAIATAKANNMPKDNIDAAIKRASGKDSADIKNIHYEGKAAHGALVIVECMSDNPTRTVANVKAIFSKNGGEVLQNGSLGFMFTRKAVFHLEKFAGDLEELELDLIDAGLEELEQNEEELVISGDYTAFGELSSAIETKGLVLKKAGLEYIPNNPVSFSEEQLSDIEKLLDKLEDDDDVQAVYTNID.

This sequence belongs to the TACO1 family.

The protein localises to the cytoplasm. This Campylobacter jejuni subsp. jejuni serotype O:23/36 (strain 81-176) protein is Probable transcriptional regulatory protein CJJ81176_1187.